We begin with the raw amino-acid sequence, 500 residues long: Transcription termination/antitermination protein NusA (500 aa).

The 71-residue stretch at 135–205 (GEIVTGVVKK…RGAQLFVTRS (71 aa)) folds into the S1 motif domain. In terms of domain architecture, KH spans 307 to 373 (KHTMDIAVEA…FTKYLDIDEE (67 aa)). 2 consecutive repeat copies span residues 369–419 (DIDE…KNAL) and 444–494 (GLDR…RNIC). The tract at residues 369 to 494 (DIDEEFATVL…ELIMAARNIC (126 aa)) is 2 X 51 AA approximate repeats.

The protein belongs to the NusA family. Monomer. Binds directly to the core enzyme of the DNA-dependent RNA polymerase and to nascent RNA.

Its subcellular location is the cytoplasm. In terms of biological role, participates in both transcription termination and antitermination. The chain is Transcription termination/antitermination protein NusA from Salmonella typhimurium (strain LT2 / SGSC1412 / ATCC 700720).